The primary structure comprises 149 residues: 3-hydroxyacyl-[acyl-carrier-protein] dehydratase FabZ (149 aa).

H53 is a catalytic residue.

The protein belongs to the thioester dehydratase family. FabZ subfamily.

Its subcellular location is the cytoplasm. The catalysed reaction is a (3R)-hydroxyacyl-[ACP] = a (2E)-enoyl-[ACP] + H2O. Involved in unsaturated fatty acids biosynthesis. Catalyzes the dehydration of short chain beta-hydroxyacyl-ACPs and long chain saturated and unsaturated beta-hydroxyacyl-ACPs. This is 3-hydroxyacyl-[acyl-carrier-protein] dehydratase FabZ from Polynucleobacter asymbioticus (strain DSM 18221 / CIP 109841 / QLW-P1DMWA-1) (Polynucleobacter necessarius subsp. asymbioticus).